The chain runs to 67 residues: Large ribosomal subunit protein bL35 (67 aa).

This sequence belongs to the bacterial ribosomal protein bL35 family.

This Agrobacterium fabrum (strain C58 / ATCC 33970) (Agrobacterium tumefaciens (strain C58)) protein is Large ribosomal subunit protein bL35.